Reading from the N-terminus, the 147-residue chain is Large ribosomal subunit protein uL16 (147 aa).

It belongs to the universal ribosomal protein uL16 family. Part of the 50S ribosomal subunit.

In terms of biological role, binds 23S rRNA and is also seen to make contacts with the A and possibly P site tRNAs. This is Large ribosomal subunit protein uL16 from Finegoldia magna (strain ATCC 29328 / DSM 20472 / WAL 2508) (Peptostreptococcus magnus).